The chain runs to 249 residues: 23S rRNA (guanosine-2'-O-)-methyltransferase RlmB (249 aa).

Positions 200, 220, and 229 each coordinate S-adenosyl-L-methionine.

It belongs to the class IV-like SAM-binding methyltransferase superfamily. RNA methyltransferase TrmH family. RlmB subfamily.

Its subcellular location is the cytoplasm. It catalyses the reaction guanosine(2251) in 23S rRNA + S-adenosyl-L-methionine = 2'-O-methylguanosine(2251) in 23S rRNA + S-adenosyl-L-homocysteine + H(+). Functionally, specifically methylates the ribose of guanosine 2251 in 23S rRNA. The chain is 23S rRNA (guanosine-2'-O-)-methyltransferase RlmB from Xylella fastidiosa (strain 9a5c).